The sequence spans 171 residues: UPF0316 protein Exig_2248 (171 aa).

The next 3 helical transmembrane spans lie at 4-24 (ILLI…RTIM), 31-51 (IIAG…LGIV), and 57-77 (TVGM…GGFV).

Belongs to the UPF0316 family.

It is found in the cell membrane. This Exiguobacterium sibiricum (strain DSM 17290 / CCUG 55495 / CIP 109462 / JCM 13490 / 255-15) protein is UPF0316 protein Exig_2248.